The primary structure comprises 113 residues: Hydrogenase maturation factor HypA (113 aa).

Ni(2+) is bound at residue His2. Residues Cys73, Cys76, Cys89, and Cys92 each coordinate Zn(2+).

The protein belongs to the HypA/HybF family.

Its function is as follows. Involved in the maturation of [NiFe] hydrogenases. Required for nickel insertion into the metal center of the hydrogenase. This is Hydrogenase maturation factor HypA from Paracoccus denitrificans (strain Pd 1222).